The following is a 294-amino-acid chain: Homeobox protein Nkx-2.5 (294 aa).

Disordered stretches follow at residues 48–69 (GSEPPALPELPEPPPAKPPAAF) and 102–122 (EQEKRELEDPERPRQRKRRKP). The span at 52–69 (PALPELPEPPPAKPPAAF) shows a compositional bias: pro residues. Positions 102–114 (EQEKRELEDPERP) are enriched in basic and acidic residues. Residues 119 to 178 (RRKPRVLFSQAQVYELERRFKQQKYLSAPERDHLANVLKLTSTQVKIWFQNRRYKCKRQR) constitute a DNA-binding region (homeobox).

It belongs to the NK-2 homeobox family. Homodimer (via the homeobox); binds DNA as homodimer.

The protein localises to the nucleus. In terms of biological role, transcription factor required for the development of the heart and the spleen. Implicated in commitment to and/or differentiation of the myocardial lineage. Binds to the core DNA motif of promoter. This is Homeobox protein Nkx-2.5 (NKX-2.5) from Gallus gallus (Chicken).